The sequence spans 398 residues: Small ribosomal subunit protein mS29 (398 aa).

Residues 1-21 (MMLKGITRLISRIHKLDPGRF) constitute a mitochondrion transit peptide. Residues 39 to 67 (QVPVESPRAISRTNENDPAKHGDQHEGQH) form a disordered region. Residues 52–66 (NENDPAKHGDQHEGQ) show a composition bias toward basic and acidic residues. Residues Met100 and 128–135 (GEKGTGKT) contribute to the GTP site. An N6-acetyllysine mark is found at Lys175 and Lys207.

Belongs to the mitochondrion-specific ribosomal protein mS29 family. In terms of assembly, component of the mitochondrial small ribosomal subunit (mt-SSU). Mature mammalian 55S mitochondrial ribosomes consist of a small (28S) and a large (39S) subunit. The 28S small subunit contains a 12S ribosomal RNA (12S mt-rRNA) and 30 different proteins. The 39S large subunit contains a 16S rRNA (16S mt-rRNA), a copy of mitochondrial valine transfer RNA (mt-tRNA(Val)), which plays an integral structural role, and 52 different proteins. Interacts with DELE1. Interacts with NOA1. Ubiquitous.

The protein localises to the mitochondrion. It catalyses the reaction GTP + H2O = GDP + phosphate + H(+). As a component of the mitochondrial small ribosomal subunit, it plays a role in the translation of mitochondrial mRNAs. Involved in mediating interferon-gamma-induced cell death. Displays GTPase activity in vitro. The polypeptide is Small ribosomal subunit protein mS29 (Homo sapiens (Human)).